The chain runs to 213 residues: Iron sulfur cluster assembly protein 1, mitochondrial (213 aa).

This sequence belongs to the NifU family. Component of the core Fe-S cluster (ISC) assembly machinery. Requires [2Fe-2S] cluster as cofactor.

The protein localises to the mitochondrion matrix. It functions in the pathway cofactor biosynthesis; iron-sulfur cluster biosynthesis. In terms of biological role, scaffold protein for the de novo synthesis of iron-sulfur (Fe-S) clusters within mitochondria, which is required for maturation of both mitochondrial and cytoplasmic [2Fe-2S] and [4Fe-4S] proteins. First, a [2Fe-2S] cluster is transiently assembled on the scaffold protein ISU1. In a second step, the cluster is released from ISU1, transferred to a glutaredoxin, followed by the formation of mitochondrial [2Fe-2S] proteins, the synthesis of [4Fe-4S] clusters and their target-specific insertion into the recipient apoproteins. Cluster assembly on ISU1 depends on the function of the cysteine desulfurase complex NFS1-ISD11, which serves as the sulfur donor for cluster synthesis, the iron-binding protein frataxin as the putative iron donor, and the electron transfer chain comprised of ferredoxin reductase and ferredoxin, which receive their electrons from NADH. The polypeptide is Iron sulfur cluster assembly protein 1, mitochondrial (ISU1) (Candida glabrata (strain ATCC 2001 / BCRC 20586 / JCM 3761 / NBRC 0622 / NRRL Y-65 / CBS 138) (Yeast)).